Here is a 97-residue protein sequence, read N- to C-terminus: Small ribosomal subunit protein bS20 (97 aa).

Belongs to the bacterial ribosomal protein bS20 family.

Its function is as follows. Binds directly to 16S ribosomal RNA. In Prochlorococcus marinus subsp. pastoris (strain CCMP1986 / NIES-2087 / MED4), this protein is Small ribosomal subunit protein bS20.